Reading from the N-terminus, the 428-residue chain is Metal tolerance protein 10 (428 aa).

Residues 1–140 (MPLNSYIFFL…EMKKLAKSER (140 aa)) are Cytoplasmic-facing. A helical membrane pass occupies residues 141–161 (LAVHISNATNLVLFVAKVYAS). Residues 162 to 167 (MESRSM) are Vacuolar-facing. The helical transmembrane segment at 168–188 (AVIASTLDSLLDLLSGFILWF) threads the bilayer. Over 189–209 (TANAMRKPNQFHYPIGKRRMQ) the chain is Cytoplasmic. A helical membrane pass occupies residues 210–230 (PVGIIVFASVMATLGLQVLLE). The Vacuolar segment spans residues 231-248 (SGRQLVAKSGIHMNSTEE). A helical membrane pass occupies residues 249 to 269 (KWMIGIMVSVTIVKFLLMLYC). At 270–287 (RGFQNEIVRAYAQDHLFD) the chain is on the cytoplasmic side. A helical membrane pass occupies residues 288-308 (VVTNSIGLATAVLAVKFYWWI). At 309–311 (DPT) the chain is on the vacuolar side. A helical transmembrane segment spans residues 312–332 (GAILIALYTIATWARTVLENV). Topologically, residues 333–428 (HSLIGRSAPP…FTHRPEHKCN (96 aa)) are cytoplasmic.

It belongs to the cation diffusion facilitator (CDF) transporter (TC 2.A.4) family. SLC30A subfamily.

It is found in the vacuole membrane. In terms of biological role, involved in sequestration of excess metal in the cytoplasm into vacuoles to maintain metal homeostasis. The sequence is that of Metal tolerance protein 10 (MTP10) from Arabidopsis thaliana (Mouse-ear cress).